The chain runs to 456 residues: MLPSQSPAIFTVSRLNQTVRLLLEHEMGQVWISGEISNFTQPASGHWYFTLKDDTAQVRCAMFRNSNRRVTFRPQHGQQVLVRANITLYEPRGDYQIIVESMQPAGEGLLQQKYEQLKAKLQAEGLFDLQYKKPLPSPAHCVGVITSKTGAALHDILHVLKRRDPSLPVIIYPTAVQGDDAPGQIVRAIELANQCNECDVLIVGRGGGSLEDLWSFNDERVARAIFASRIPVVSAVGHETDVTIADFVADLRAPTPSAAAEVVSRNQQELLRQVQSTRQRLEMAMDYYLANRTRRFTQIHHRLQQQHPQLRLARQQTMLERLQKRMSFALENQLKRAGQQQQRLTQRLNQQNPQPKIHRAQTRIQQLEYRLAETLRAQLSATRERFGNAVTHLEAVSPLSTLARGYSVTTATDGKVLKKVKQVKAGEMLTTRLEDGWVESEVKNIQPVKKSRKKVH.

Belongs to the XseA family. In terms of assembly, heterooligomer composed of large and small subunits.

The protein resides in the cytoplasm. The catalysed reaction is Exonucleolytic cleavage in either 5'- to 3'- or 3'- to 5'-direction to yield nucleoside 5'-phosphates.. Functionally, bidirectionally degrades single-stranded DNA into large acid-insoluble oligonucleotides, which are then degraded further into small acid-soluble oligonucleotides. The sequence is that of Exodeoxyribonuclease 7 large subunit from Escherichia coli O157:H7.